The chain runs to 423 residues: 3-phosphoshikimate 1-carboxyvinyltransferase (423 aa).

Positions 19, 20, and 24 each coordinate 3-phosphoshikimate. Lysine 19 lines the phosphoenolpyruvate pocket. Residues glycine 89 and arginine 118 each coordinate phosphoenolpyruvate. Serine 164, serine 165, glutamine 166, serine 192, aspartate 304, and lysine 331 together coordinate 3-phosphoshikimate. Residue glutamine 166 coordinates phosphoenolpyruvate. Aspartate 304 (proton acceptor) is an active-site residue. 2 residues coordinate phosphoenolpyruvate: arginine 335 and arginine 377.

It belongs to the EPSP synthase family. In terms of assembly, monomer.

It is found in the cytoplasm. It carries out the reaction 3-phosphoshikimate + phosphoenolpyruvate = 5-O-(1-carboxyvinyl)-3-phosphoshikimate + phosphate. Its pathway is metabolic intermediate biosynthesis; chorismate biosynthesis. Functionally, catalyzes the transfer of the enolpyruvyl moiety of phosphoenolpyruvate (PEP) to the 5-hydroxyl of shikimate-3-phosphate (S3P) to produce enolpyruvyl shikimate-3-phosphate and inorganic phosphate. This chain is 3-phosphoshikimate 1-carboxyvinyltransferase, found in Korarchaeum cryptofilum (strain OPF8).